The sequence spans 351 residues: Phosphoribosylformylglycinamidine cyclo-ligase (351 aa).

It belongs to the AIR synthase family.

It is found in the cytoplasm. The catalysed reaction is 2-formamido-N(1)-(5-O-phospho-beta-D-ribosyl)acetamidine + ATP = 5-amino-1-(5-phospho-beta-D-ribosyl)imidazole + ADP + phosphate + H(+). Its pathway is purine metabolism; IMP biosynthesis via de novo pathway; 5-amino-1-(5-phospho-D-ribosyl)imidazole from N(2)-formyl-N(1)-(5-phospho-D-ribosyl)glycinamide: step 2/2. This is Phosphoribosylformylglycinamidine cyclo-ligase from Synechococcus sp. (strain JA-3-3Ab) (Cyanobacteria bacterium Yellowstone A-Prime).